The sequence spans 140 residues: Nucleoside diphosphate kinase (140 aa).

6 residues coordinate ATP: K11, F59, R87, T93, R104, and N114. H117 serves as the catalytic Pros-phosphohistidine intermediate.

This sequence belongs to the NDK family. Homotetramer. Mg(2+) serves as cofactor.

It is found in the cytoplasm. It catalyses the reaction a 2'-deoxyribonucleoside 5'-diphosphate + ATP = a 2'-deoxyribonucleoside 5'-triphosphate + ADP. The catalysed reaction is a ribonucleoside 5'-diphosphate + ATP = a ribonucleoside 5'-triphosphate + ADP. Major role in the synthesis of nucleoside triphosphates other than ATP. The ATP gamma phosphate is transferred to the NDP beta phosphate via a ping-pong mechanism, using a phosphorylated active-site intermediate. The sequence is that of Nucleoside diphosphate kinase from Erythrobacter litoralis (strain HTCC2594).